The chain runs to 293 residues: 5'-3' exoribonuclease Rnm (293 aa).

The Mn(2+) site is built by histidine 17, histidine 19, aspartate 24, histidine 49, glutamate 76, histidine 87, histidine 202, aspartate 259, and histidine 261.

It belongs to the PHP family. TrpH/YciV subfamily. Requires Mn(2+) as cofactor.

It catalyses the reaction a ribonucleoside 3',5'-bisphosphate + H2O = a ribonucleoside 5'-phosphate + phosphate. Functionally, exoribonuclease that catalyzes the last steps of 5S, 16S and 23S rRNA 5'-end maturation. Removes 3 nucleotides (nt) from the 5' end of 5S, 16S and 23S rRNA precursors to generate the mature 5' ends. 5S and 23S rRNA maturation occurs more efficiently and accurately on ribosomal particles as compared to free RNA. Efficiently catalyzes the hydrolysis of the 3'-phosphate from 3',5'-bis-phosphonucleotides as well as the successive hydrolysis of 5'-phosphomononucleotides from the 5'-end of short pieces of RNA and DNA, with no specificity toward the identity of the nucleotide base. Is more efficient at hydrolyzing RNA oligonucleotides than DNA oligonucleotides. This enzyme can also hydrolyze annealed DNA duplexes, albeit at a catalytic efficiency lower than that of the corresponding single-stranded oligonucleotides. The polypeptide is 5'-3' exoribonuclease Rnm (Salmonella typhimurium (strain LT2 / SGSC1412 / ATCC 700720)).